Consider the following 256-residue polypeptide: Ribonuclease 3 (256 aa).

The RNase III domain maps to 3-125 (LDALQQRLGY…IVGAVFLDAG (123 aa)). Glutamate 38 provides a ligand contact to Mg(2+). Residue aspartate 42 is part of the active site. Residues aspartate 111 and glutamate 114 each contribute to the Mg(2+) site. The active site involves glutamate 114. The DRBM domain occupies 152–222 (DAKTLLQEYL…AKLALDEVQK (71 aa)). Residues 229–256 (KRSRAERTGKTRKQPQPQDPQLSLRLKE) form a disordered region.

The protein belongs to the ribonuclease III family. Homodimer. Mg(2+) is required as a cofactor.

The protein resides in the cytoplasm. The enzyme catalyses Endonucleolytic cleavage to 5'-phosphomonoester.. Functionally, digests double-stranded RNA. Involved in the processing of primary rRNA transcript to yield the immediate precursors to the large and small rRNAs (23S and 16S). Processes some mRNAs, and tRNAs when they are encoded in the rRNA operon. Processes pre-crRNA and tracrRNA of type II CRISPR loci if present in the organism. This is Ribonuclease 3 from Cupriavidus taiwanensis (strain DSM 17343 / BCRC 17206 / CCUG 44338 / CIP 107171 / LMG 19424 / R1) (Ralstonia taiwanensis (strain LMG 19424)).